Consider the following 154-residue polypeptide: Putative pre-16S rRNA nuclease (154 aa).

This sequence belongs to the YqgF nuclease family.

It localises to the cytoplasm. Functionally, could be a nuclease involved in processing of the 5'-end of pre-16S rRNA. In Rickettsia felis (strain ATCC VR-1525 / URRWXCal2) (Rickettsia azadi), this protein is Putative pre-16S rRNA nuclease.